A 525-amino-acid polypeptide reads, in one-letter code: GMP synthase [glutamine-hydrolyzing] (525 aa).

Residues 8–207 (KILILDFGSQ…AVAICGCGTN (200 aa)) form the Glutamine amidotransferase type-1 domain. Cys-85 functions as the Nucleophile in the catalytic mechanism. Residues His-181 and Glu-183 contribute to the active site. In terms of domain architecture, GMPS ATP-PPase spans 208-400 (WKPSSIIEDA…LGLPYNMLYR (193 aa)). 235–241 (SGGVDSS) contributes to the ATP binding site.

Homodimer.

It carries out the reaction XMP + L-glutamine + ATP + H2O = GMP + L-glutamate + AMP + diphosphate + 2 H(+). It functions in the pathway purine metabolism; GMP biosynthesis; GMP from XMP (L-Gln route): step 1/1. Its function is as follows. Catalyzes the synthesis of GMP from XMP. In Shewanella denitrificans (strain OS217 / ATCC BAA-1090 / DSM 15013), this protein is GMP synthase [glutamine-hydrolyzing].